The primary structure comprises 244 residues: Carboxy-S-adenosyl-L-methionine synthase (244 aa).

S-adenosyl-L-methionine is bound by residues Tyr-41, 66 to 68 (GCS), Asn-134, and Arg-201.

Belongs to the class I-like SAM-binding methyltransferase superfamily. Cx-SAM synthase family. Homodimer.

The catalysed reaction is prephenate + S-adenosyl-L-methionine = carboxy-S-adenosyl-L-methionine + 3-phenylpyruvate + H2O. In terms of biological role, catalyzes the conversion of S-adenosyl-L-methionine (SAM) to carboxy-S-adenosyl-L-methionine (Cx-SAM). The sequence is that of Carboxy-S-adenosyl-L-methionine synthase from Cellvibrio japonicus (strain Ueda107) (Pseudomonas fluorescens subsp. cellulosa).